The chain runs to 49 residues: Large ribosomal subunit protein bL33B (49 aa).

The protein belongs to the bacterial ribosomal protein bL33 family.

This is Large ribosomal subunit protein bL33B from Levilactobacillus brevis (strain ATCC 367 / BCRC 12310 / CIP 105137 / JCM 1170 / LMG 11437 / NCIMB 947 / NCTC 947) (Lactobacillus brevis).